Here is a 232-residue protein sequence, read N- to C-terminus: Ribonuclease 3 (232 aa).

The 134-residue stretch at 2–135 folds into the RNase III domain; sequence IKALEDDLSQ…FIGALYLDQG (134 aa). Glu48 contributes to the Mg(2+) binding site. Asp52 is a catalytic residue. Residues Asp121 and Glu124 each coordinate Mg(2+). Glu124 is a catalytic residue. Positions 161 to 230 constitute a DRBM domain; sequence DHKSELQELL…ANQALQLLRR (70 aa).

This sequence belongs to the ribonuclease III family. Homodimer. It depends on Mg(2+) as a cofactor.

The protein localises to the cytoplasm. It catalyses the reaction Endonucleolytic cleavage to 5'-phosphomonoester.. In terms of biological role, digests double-stranded RNA. Involved in the processing of primary rRNA transcript to yield the immediate precursors to the large and small rRNAs (23S and 16S). Processes some mRNAs, and tRNAs when they are encoded in the rRNA operon. Processes pre-crRNA and tracrRNA of type II CRISPR loci if present in the organism. The protein is Ribonuclease 3 of Pediococcus pentosaceus (strain ATCC 25745 / CCUG 21536 / LMG 10740 / 183-1w).